The primary structure comprises 365 residues: Eukaryotic translation initiation factor 3 subunit H (365 aa).

The region spanning 11 to 160 (VKVDALVVMK…LRAFRLSSKF (150 aa)) is the MPN domain.

Belongs to the eIF-3 subunit H family. Component of the eukaryotic translation initiation factor 3 (eIF-3) complex.

The protein resides in the cytoplasm. In terms of biological role, component of the eukaryotic translation initiation factor 3 (eIF-3) complex, which is involved in protein synthesis of a specialized repertoire of mRNAs and, together with other initiation factors, stimulates binding of mRNA and methionyl-tRNAi to the 40S ribosome. The eIF-3 complex specifically targets and initiates translation of a subset of mRNAs involved in cell proliferation. This Aspergillus oryzae (strain ATCC 42149 / RIB 40) (Yellow koji mold) protein is Eukaryotic translation initiation factor 3 subunit H.